We begin with the raw amino-acid sequence, 225 residues long: Cardiotrophin-like cytokine factor 1 (225 aa).

Residues 1 to 27 form the signal peptide; that stretch reads MDLRAGDSWGMLACLCTVLWHLPAVPA. The N-linked (GlcNAc...) asparagine glycan is linked to Asn-29.

This sequence belongs to the IL-6 superfamily. As to quaternary structure, forms a heteromeric complex with cardiotrophin-like cytokine CRLF1/CLF-1; the CRLF1-CLCF1 complex is a ligand for the ciliary neurotrophic factor receptor/CNTFR. The CRLF1-CLCF1 heterodimer binds SORL1 (via N-terminal ectodomain); within this complex, the interaction is mediated predominantly by the CRLF1 moiety. The tripartite signaling complex formed by CRLF1, CLCF1 and CNTFR also binds SORL1. In terms of tissue distribution, expressed predominantly in lymph nodes, spleen, peripheral blood lymphocytes, bone marrow, and fetal liver.

The protein resides in the secreted. In complex with CRLF1, forms a heterodimeric neurotropic cytokine that plays a crucial role during neuronal development. Also stimulates B-cells. Binds to and activates the ILST/gp130 receptor. This chain is Cardiotrophin-like cytokine factor 1 (CLCF1), found in Homo sapiens (Human).